The chain runs to 443 residues: Methyl-coenzyme M reductase subunit beta (443 aa).

Tyr-367 is a coenzyme M binding site. Gly-369 contributes to the coenzyme B binding site.

Belongs to the methyl-coenzyme M reductase beta subunit family. As to quaternary structure, MCR is a hexamer of two alpha, two beta, and two gamma chains, forming a dimer of heterotrimers. It depends on coenzyme F430 as a cofactor.

Its subcellular location is the cytoplasm. It carries out the reaction coenzyme B + methyl-coenzyme M = methane + coenzyme M-coenzyme B heterodisulfide. The protein operates within one-carbon metabolism; methyl-coenzyme M reduction; methane from methyl-coenzyme M: step 1/1. Component of the methyl-coenzyme M reductase (MCR) I that catalyzes the reductive cleavage of methyl-coenzyme M (CoM-S-CH3 or 2-(methylthio)ethanesulfonate) using coenzyme B (CoB or 7-mercaptoheptanoylthreonine phosphate) as reductant which results in the production of methane and the mixed heterodisulfide of CoB and CoM (CoM-S-S-CoB). This is the final step in methanogenesis. The chain is Methyl-coenzyme M reductase subunit beta (mcrB) from Methanococcus vannielii.